The chain runs to 89 residues: Meiosis expressed gene 1 protein homolog (89 aa).

It belongs to the MEIG1 family.

This Nematostella vectensis (Starlet sea anemone) protein is Meiosis expressed gene 1 protein homolog.